The following is a 376-amino-acid chain: Protein-tyrosine sulfotransferase 2 (376 aa).

At 1–8 the chain is on the cytoplasmic side; that stretch reads MRLSVRKV. Residues 9 to 25 form a helical; Signal-anchor for type II membrane protein membrane-spanning segment; sequence LLAAGCALALVLAVQLG. Over 26–376 the chain is Lumenal; sequence QQVLECRAVL…NSTSPHLGSS (351 aa). Residue 77–81 participates in 3'-phosphoadenylyl sulfate binding; it reads RSGTT. Cysteine 95 and cysteine 155 are disulfide-bonded. The active-site Proton donor/acceptor is glutamate 98. Residues 100 to 104 are interaction with peptide substrate; sequence RIIPR. Residues arginine 182, serine 190, and arginine 194 each coordinate 3'-phosphoadenylyl sulfate. A disulfide bond links cysteine 224 and cysteine 232. Residues tyrosine 237, 284–293, and lysine 299 each bind 3'-phosphoadenylyl sulfate; that span reads STDQVIKPVN. 2 N-linked (GlcNAc...) asparagine glycosylation sites follow: asparagine 342 and asparagine 367.

It belongs to the protein sulfotransferase family. Homodimer. Can also form heterodimers with TPST1. In terms of processing, N-glycosylated. In terms of tissue distribution, widely expressed.

It is found in the golgi apparatus membrane. The enzyme catalyses L-tyrosyl-[protein] + 3'-phosphoadenylyl sulfate = O-sulfo-L-tyrosine-[protein] + adenosine 3',5'-bisphosphate + H(+). Catalyzes the O-sulfation of tyrosine residues within acidic motifs of polypeptides, using 3'-phosphoadenylyl sulfate (PAPS) as cosubstrate. The sequence is that of Protein-tyrosine sulfotransferase 2 (Tpst2) from Mus musculus (Mouse).